Consider the following 415-residue polypeptide: Tyrosine--tRNA ligase (415 aa).

Y34 is an L-tyrosine binding site. Residues 39 to 48 (PSADSLHLGN) carry the 'HIGH' region motif. L-tyrosine contacts are provided by Y162 and Q166. A 'KMSKS' region motif is present at residues 224 to 228 (KFGKS). K227 provides a ligand contact to ATP. One can recognise an S4 RNA-binding domain in the interval 346–413 (IKIIDLLNLA…KRNYFLIVWN (68 aa)).

Belongs to the class-I aminoacyl-tRNA synthetase family. TyrS type 1 subfamily. Homodimer.

The protein localises to the cytoplasm. The enzyme catalyses tRNA(Tyr) + L-tyrosine + ATP = L-tyrosyl-tRNA(Tyr) + AMP + diphosphate + H(+). Its function is as follows. Catalyzes the attachment of tyrosine to tRNA(Tyr) in a two-step reaction: tyrosine is first activated by ATP to form Tyr-AMP and then transferred to the acceptor end of tRNA(Tyr). The polypeptide is Tyrosine--tRNA ligase (Ureaplasma urealyticum serovar 10 (strain ATCC 33699 / Western)).